The chain runs to 408 residues: Peptidase T (408 aa).

Positions 1 to 28 are disordered; sequence MKNQLIDRLTRYTTIDTQSDPKSTTTPS. Positions 11-28 are enriched in polar residues; sequence RYTTIDTQSDPKSTTTPS. H78 is a Zn(2+) binding site. The active site involves D80. Residue D140 coordinates Zn(2+). Residue E174 is the Proton acceptor of the active site. Residues E175, D197, and H379 each coordinate Zn(2+).

This sequence belongs to the peptidase M20B family. It depends on Zn(2+) as a cofactor.

It localises to the cytoplasm. It catalyses the reaction Release of the N-terminal residue from a tripeptide.. Functionally, cleaves the N-terminal amino acid of tripeptides. This Staphylococcus aureus (strain USA300 / TCH1516) protein is Peptidase T.